A 917-amino-acid chain; its full sequence is MSMDMTTRMFKEEGWIRKKCPKCGKYFWTLDPDRETCGDPPCDEYQFIGKPGIPKKYTLDEMREKFLSFFEKHESYPHGRVKRYPVLPRWRDDVLLVGASIMDFQPWVISGEADPPANPLTISQPSIRFTDIDNVGITGRHFTIFEMMAHHAFNYPGKPIYWMDETVELAFEFFTKELKMKPEDITFKENPWAGGGNAGPAFEVLYRGLEVATLVFMQYKKAPADADPSQVVEIKGDYYVPMETRVVDTGYGLERLVWMSHGTPTAYDAVLGYVIEPLKKMAGVEKIDERILMENSRLAGMFDIEDMGDLRYLREQVAKRVGISVEELEKAVRPYELIYAIADHTKALTFMLADGVIPSNVKAGYLARLLIRKSIRHLRELGLEIPLAEIVAMHIKELSPTFPEFKEMEDVILDIINVEEKRYAETLRRGSDLVKREIAKLKKKGINELPLEKLILFYESHGLTPEIVAEVAEKEGIKVNIPDNFYTLVAKEAEKQAEKKEAAEYVVDFELVKDLPDTRTLYYEDPFMKEFDARVLKVIADWVVLDQTAFYPEGGGQPYDTGVLEVNGEKVKVTNVQKVGKVILHKVEKPELFKEGVTVHGRLDWDRRIQHMRHHTGTHVLMGALVRVLGKHVWQAGSQLHTDWARLDISHYKRITEEELREIERLANRVVMENRKVTWEWLPRTEAEMKYGFRLYQGGVVPGRVIRVLKIEDWDVQACGGTHLPNTGLIGPIKILRTERIQDGVERIIFAAGEAAINWMQETERLLKRTAEIFRVPPEKVPETAERFFNEWKEARKEVEKLRKELAKLLVYELQEKVEKVGNVEFIGAVVEGTIDDLREAANRLRKENRVVVLISREGHFVVAVGDGLDLKAGELAKVITSVAGGGGGGRKELAQGRIKNPLKAEEAIEEVKKMLG.

Residues histidine 615, histidine 619, cysteine 719, and histidine 723 each contribute to the Zn(2+) site.

Belongs to the class-II aminoacyl-tRNA synthetase family. The cofactor is Zn(2+).

The protein resides in the cytoplasm. It catalyses the reaction tRNA(Ala) + L-alanine + ATP = L-alanyl-tRNA(Ala) + AMP + diphosphate. Its function is as follows. Catalyzes the attachment of alanine to tRNA(Ala) in a two-step reaction: alanine is first activated by ATP to form Ala-AMP and then transferred to the acceptor end of tRNA(Ala). Also edits incorrectly charged Ser-tRNA(Ala) and Gly-tRNA(Ala) via its editing domain. This Thermococcus kodakarensis (strain ATCC BAA-918 / JCM 12380 / KOD1) (Pyrococcus kodakaraensis (strain KOD1)) protein is Alanine--tRNA ligase.